Reading from the N-terminus, the 472-residue chain is Glutamate--tRNA ligase (472 aa).

Residues 10–20 (PSPTGYLHVGG) carry the 'HIGH' region motif. Zn(2+) is bound by residues cysteine 99, cysteine 101, cysteine 126, and histidine 128. Residues 238–242 (KLSKR) carry the 'KMSKS' region motif. Lysine 241 is an ATP binding site.

It belongs to the class-I aminoacyl-tRNA synthetase family. Glutamate--tRNA ligase type 1 subfamily. As to quaternary structure, monomer. The cofactor is Zn(2+).

It is found in the cytoplasm. The enzyme catalyses tRNA(Glu) + L-glutamate + ATP = L-glutamyl-tRNA(Glu) + AMP + diphosphate. Its function is as follows. Catalyzes the attachment of glutamate to tRNA(Glu) in a two-step reaction: glutamate is first activated by ATP to form Glu-AMP and then transferred to the acceptor end of tRNA(Glu). The sequence is that of Glutamate--tRNA ligase from Proteus mirabilis (strain HI4320).